The primary structure comprises 358 residues: Probable RNA methyltransferase MXAN_6459 (358 aa).

The active-site Proton acceptor is the Glu92. The 229-residue stretch at 99-327 folds into the Radical SAM core domain; the sequence is FDEKYVICVS…PVARRYSGGK (229 aa). A disulfide bridge connects residues Cys106 and Cys333. 3 residues coordinate [4Fe-4S] cluster: Cys113, Cys117, and Cys120. S-adenosyl-L-methionine contacts are provided by residues 160–161, Ser192, 215–217, and Asp289; these read GE and SVT. Catalysis depends on Cys333, which acts as the S-methylcysteine intermediate.

It belongs to the radical SAM superfamily. RlmN family. The cofactor is [4Fe-4S] cluster.

Its subcellular location is the cytoplasm. This chain is Probable RNA methyltransferase MXAN_6459, found in Myxococcus xanthus (strain DK1622).